Reading from the N-terminus, the 175-residue chain is Adenylate kinase isoenzyme 6 homolog (175 aa).

Residues G17, G19, K20, T21, and S22 each coordinate ATP. Residues 37 to 60 (DISSAVKEKELHDGWDSEFQCYIL) form an NMPbind region. The tract at residues 112–122 (KRNYNQHKITN) is LID. R113 is an ATP binding site.

This sequence belongs to the adenylate kinase family. AK6 subfamily. As to quaternary structure, monomer and homodimer. Interacts with small ribosomal subunit protein uS11. Not a structural component of 43S pre-ribosomes, but transiently interacts with them by binding to uS11.

The protein resides in the cytoplasm. It localises to the nucleus. The catalysed reaction is AMP + ATP = 2 ADP. It catalyses the reaction ATP + H2O = ADP + phosphate + H(+). In terms of biological role, broad-specificity nucleoside monophosphate (NMP) kinase that catalyzes the reversible transfer of the terminal phosphate group between nucleoside triphosphates and monophosphates. Also has ATPase activity. Involved in the late cytoplasmic maturation steps of the 40S ribosomal particles, specifically 18S rRNA maturation. While NMP activity is not required for ribosome maturation, ATPase activity is. Associates transiently with small ribosomal subunit protein uS11. ATP hydrolysis breaks the interaction with uS11. May temporarily remove uS11 from the ribosome to enable a conformational change of the ribosomal RNA that is needed for the final maturation step of the small ribosomal subunit. Its NMP activity may have a role in nuclear energy homeostasis. In Dictyostelium discoideum (Social amoeba), this protein is Adenylate kinase isoenzyme 6 homolog.